Consider the following 144-residue polypeptide: Putative protein PHLOEM PROTEIN 2-LIKE B4 (144 aa).

The sequence is that of Putative protein PHLOEM PROTEIN 2-LIKE B4 (PP2B4) from Arabidopsis thaliana (Mouse-ear cress).